Consider the following 238-residue polypeptide: Demethylmenaquinone methyltransferase (238 aa).

Residues T60, D81, and 108–109 each bind S-adenosyl-L-methionine; that span reads NA.

This sequence belongs to the class I-like SAM-binding methyltransferase superfamily. MenG/UbiE family.

It catalyses the reaction a 2-demethylmenaquinol + S-adenosyl-L-methionine = a menaquinol + S-adenosyl-L-homocysteine + H(+). Its pathway is quinol/quinone metabolism; menaquinone biosynthesis; menaquinol from 1,4-dihydroxy-2-naphthoate: step 2/2. Its function is as follows. Methyltransferase required for the conversion of demethylmenaquinol (DMKH2) to menaquinol (MKH2). The polypeptide is Demethylmenaquinone methyltransferase (Oceanobacillus iheyensis (strain DSM 14371 / CIP 107618 / JCM 11309 / KCTC 3954 / HTE831)).